The following is a 269-amino-acid chain: tRNA pseudouridine synthase A (269 aa).

Aspartate 51 functions as the Nucleophile in the catalytic mechanism. Position 109 (tyrosine 109) interacts with substrate.

The protein belongs to the tRNA pseudouridine synthase TruA family. As to quaternary structure, homodimer.

It catalyses the reaction uridine(38/39/40) in tRNA = pseudouridine(38/39/40) in tRNA. Functionally, formation of pseudouridine at positions 38, 39 and 40 in the anticodon stem and loop of transfer RNAs. The chain is tRNA pseudouridine synthase A from Aeromonas salmonicida (strain A449).